The primary structure comprises 357 residues: UPF0744 protein C106.03 (357 aa).

Serine 282 carries the post-translational modification Phosphoserine.

This sequence belongs to the UPF0744 family.

It localises to the cytoplasm. The sequence is that of UPF0744 protein C106.03 from Schizosaccharomyces pombe (strain 972 / ATCC 24843) (Fission yeast).